The chain runs to 651 residues: Cylicin-1 (651 aa).

2 disordered regions span residues Leu-110–Asn-241 and Asn-267–Ser-615. Basic and acidic residues-rich tracts occupy residues Lys-111–Lys-129 and Gln-146–Lys-173. Over residues Gln-186–Cys-195 the composition is skewed to polar residues. Over residues Ser-196–Asn-205 the composition is skewed to basic and acidic residues. The segment covering Ser-230–Asn-241 has biased composition (polar residues). Over residues Asn-271–Thr-281 the composition is skewed to low complexity. 8 repeat units span residues Leu-278–Asp-305, Ala-306–Asp-342, Glu-343–Asp-379, Ala-380–Glu-417, Ser-418–Asp-453, Ser-454–Glu-491, Leu-492–Gly-531, and Phe-532–Gly-553. Basic and acidic residues-rich tracts occupy residues Thr-284–Lys-308, Lys-318–Glu-331, Gly-338–Glu-368, Gly-375–Lys-402, Leu-413–Glu-441, and Ser-448–Glu-482. The span at Asp-495–Ser-505 shows a compositional bias: basic residues. The span at Lys-506–Glu-518 shows a compositional bias: basic and acidic residues. The segment covering Lys-529 to Ile-538 has biased composition (polar residues). Residues Phe-532–Gly-553 are 8 X approximate tandem repeats. Positions Thr-587 to Pro-607 are enriched in basic and acidic residues.

Interacts with proteins of spermatozoa head including ACTL7A, CCIN, FAM209A and SPACA1; the interactions may be necessary for proper acrosome attachment to the nuclear envelope. As to expression, testis.

The protein resides in the cytoplasm. The protein localises to the cytoskeleton. Its subcellular location is the perinuclear theca. It is found in the calyx. Its function is as follows. Plays a role in the establishment of normal sperm morphology during spermatogenesis and is required for acrosome attachment to the nuclear envelope. In Homo sapiens (Human), this protein is Cylicin-1 (CYLC1).